A 309-amino-acid polypeptide reads, in one-letter code: Probable pyridoxal 5'-phosphate synthase subunit PDX1 (309 aa).

D-ribose 5-phosphate is bound at residue D40. Catalysis depends on K97, which acts as the Schiff-base intermediate with D-ribose 5-phosphate. G169 is a binding site for D-ribose 5-phosphate. Position 181 (R181) interacts with D-glyceraldehyde 3-phosphate. D-ribose 5-phosphate is bound by residues G230 and 251–252; that span reads GS.

The protein belongs to the PdxS/SNZ family.

It carries out the reaction aldehydo-D-ribose 5-phosphate + D-glyceraldehyde 3-phosphate + L-glutamine = pyridoxal 5'-phosphate + L-glutamate + phosphate + 3 H2O + H(+). It functions in the pathway cofactor biosynthesis; pyridoxal 5'-phosphate biosynthesis. Its function is as follows. Catalyzes the formation of pyridoxal 5'-phosphate from ribose 5-phosphate (RBP), glyceraldehyde 3-phosphate (G3P) and ammonia. The ammonia is provided by PDX2. Can also use ribulose 5-phosphate and dihydroxyacetone phosphate as substrates, resulting from enzyme-catalyzed isomerization of RBP and G3P, respectively. Also plays an indirect role in resistance to singlet oxygen-generating photosensitizers. The protein is Probable pyridoxal 5'-phosphate synthase subunit PDX1 (PDX1) of Hevea brasiliensis (Para rubber tree).